The primary structure comprises 1183 residues: DNA-directed RNA polymerase subunit beta (1183 aa).

Belongs to the RNA polymerase beta chain family. The RNAP catalytic core consists of 2 alpha, 1 beta, 1 beta' and 1 omega subunit. When a sigma factor is associated with the core the holoenzyme is formed, which can initiate transcription.

The enzyme catalyses RNA(n) + a ribonucleoside 5'-triphosphate = RNA(n+1) + diphosphate. Its function is as follows. DNA-dependent RNA polymerase catalyzes the transcription of DNA into RNA using the four ribonucleoside triphosphates as substrates. The polypeptide is DNA-directed RNA polymerase subunit beta (Staphylococcus aureus (strain Mu50 / ATCC 700699)).